The chain runs to 243 residues: 2-C-methyl-D-erythritol 4-phosphate cytidylyltransferase (243 aa).

The protein belongs to the IspD/TarI cytidylyltransferase family. IspD subfamily.

It carries out the reaction 2-C-methyl-D-erythritol 4-phosphate + CTP + H(+) = 4-CDP-2-C-methyl-D-erythritol + diphosphate. Its pathway is isoprenoid biosynthesis; isopentenyl diphosphate biosynthesis via DXP pathway; isopentenyl diphosphate from 1-deoxy-D-xylulose 5-phosphate: step 2/6. Functionally, catalyzes the formation of 4-diphosphocytidyl-2-C-methyl-D-erythritol from CTP and 2-C-methyl-D-erythritol 4-phosphate (MEP). The chain is 2-C-methyl-D-erythritol 4-phosphate cytidylyltransferase from Rhodopirellula baltica (strain DSM 10527 / NCIMB 13988 / SH1).